Consider the following 51-residue polypeptide: Large ribosomal subunit protein bL33 (51 aa).

The tract at residues 1–23 (MREKIKLESSAGTGHFYTTTKNK) is disordered. Residues 10–20 (SAGTGHFYTTT) are compositionally biased toward polar residues.

Belongs to the bacterial ribosomal protein bL33 family.

The protein is Large ribosomal subunit protein bL33 of Methylobacillus flagellatus (strain ATCC 51484 / DSM 6875 / VKM B-1610 / KT).